The chain runs to 430 residues: Enolase (430 aa).

(2R)-2-phosphoglycerate is bound at residue glutamine 163. Glutamate 205 serves as the catalytic Proton donor. Mg(2+)-binding residues include aspartate 242, glutamate 287, and aspartate 314. (2R)-2-phosphoglycerate is bound by residues lysine 339, arginine 368, serine 369, and lysine 390. Catalysis depends on lysine 339, which acts as the Proton acceptor.

Belongs to the enolase family. Requires Mg(2+) as cofactor.

It is found in the cytoplasm. It localises to the secreted. The protein resides in the cell surface. The enzyme catalyses (2R)-2-phosphoglycerate = phosphoenolpyruvate + H2O. The protein operates within carbohydrate degradation; glycolysis; pyruvate from D-glyceraldehyde 3-phosphate: step 4/5. In terms of biological role, catalyzes the reversible conversion of 2-phosphoglycerate (2-PG) into phosphoenolpyruvate (PEP). It is essential for the degradation of carbohydrates via glycolysis. This is Enolase from Bacillus velezensis (strain DSM 23117 / BGSC 10A6 / LMG 26770 / FZB42) (Bacillus amyloliquefaciens subsp. plantarum).